The chain runs to 62 residues: UPF0291 protein CLD_1956 (62 aa).

It belongs to the UPF0291 family.

It is found in the cytoplasm. The protein is UPF0291 protein CLD_1956 of Clostridium botulinum (strain Okra / Type B1).